A 473-amino-acid chain; its full sequence is MQHGDEMMKKMTGKSFALSALVAASFMAAGAMASDKTEPRNEVYKDKFANQYNSWHDTAKSEEITDALAGDPSLVILWAGYGFAKDYNAPRGHMYAVTDVRNTLRTGAPANAEDGPMPMACWSCKSPDVPRLIEEQGEEGYFKGKWAKGGPEVVNTIGCSDCHEKGTPKLRISRPFAERAMETIGTPFDKASKKDKQSMVCGQCHVEYYFEKKDDRKGFVKFPWDSGTTVEQMEAYYDAIEFSDWTHALSKTPMLKAQHPGYETWKLGVHGKNDVSCVDCHMPKVTNDKGRKYTDHKVGNPFDRFDETCATCHSQSKEFLEGITKERYAKVKELKARAEGQLVKAHFEAAKAWEVGATEAEMKPILTDIRHAQWRWDFAIASHGVAAHAPEEALRILGTAVDKAADARVKLAQLLAKKGVTDAVAIPDISTKAKAQAALGMDMDKMNAEKEAFKKDVLPKWDEEAKKREATYK.

Residues 1–33 (MQHGDEMMKKMTGKSFALSALVAASFMAAGAMA) form the signal peptide. H93 serves as a coordination point for heme c. C121, C124, and K125 together coordinate heme. Positions 159, 162, 163, 201, 204, and 205 each coordinate heme c. Residues E207, Y208, K256, and Q258 each contribute to the Ca(2+) site. Y208 is a substrate binding site. H259 is a binding site for substrate. Residues H270, C277, C280, H281, H296, C309, C312, H313, and H388 each contribute to the heme c site.

The protein belongs to the cytochrome c-552 family. It depends on Ca(2+) as a cofactor. Heme c is required as a cofactor.

The protein resides in the periplasm. The catalysed reaction is 6 Fe(III)-[cytochrome c] + NH4(+) + 2 H2O = 6 Fe(II)-[cytochrome c] + nitrite + 8 H(+). It participates in nitrogen metabolism; nitrate reduction (assimilation). Its function is as follows. Catalyzes the reduction of nitrite to ammonia, consuming six electrons in the process. This Shewanella sp. (strain ANA-3) protein is Cytochrome c-552.